A 262-amino-acid chain; its full sequence is Glutamate racemase (262 aa).

Substrate is bound by residues D5–S6 and Y37–G38. The active-site Proton donor/acceptor is C69. N70–T71 contributes to the substrate binding site. C181 acts as the Proton donor/acceptor in catalysis. T182–H183 contacts substrate.

This sequence belongs to the aspartate/glutamate racemases family.

The enzyme catalyses L-glutamate = D-glutamate. It participates in cell wall biogenesis; peptidoglycan biosynthesis. Functionally, provides the (R)-glutamate required for cell wall biosynthesis. The chain is Glutamate racemase from Buchnera aphidicola subsp. Acyrthosiphon pisum (strain APS) (Acyrthosiphon pisum symbiotic bacterium).